A 152-amino-acid chain; its full sequence is Large-conductance mechanosensitive channel (152 aa).

A run of 2 helical transmembrane segments spans residues valine 14 to leucine 34 and glycine 81 to isoleucine 101.

It belongs to the MscL family. In terms of assembly, homopentamer.

The protein resides in the cell membrane. Its function is as follows. Channel that opens in response to stretch forces in the membrane lipid bilayer. May participate in the regulation of osmotic pressure changes within the cell. This Clostridium perfringens (strain ATCC 13124 / DSM 756 / JCM 1290 / NCIMB 6125 / NCTC 8237 / Type A) protein is Large-conductance mechanosensitive channel.